A 1014-amino-acid chain; its full sequence is Disease resistance protein RGA4 (1014 aa).

Residues 1-182 (MEAALLSGFI…PRIHEADLVG (182 aa)) are structured coiled coil (CC) domain. Residues 105 to 145 (RTVRATKKLLQTNQHLAQELQRLKRMVEEANQRKQRYTAAA) are a coiled coil. The 278-residue stretch at 189–466 (ELLEQLAERQ…WLAEGFVEPV (278 aa)) folds into the NB-ARC domain. 11 LRR repeats span residues 484–506 (RNIIEPINVSNNDKVKTCQTYGM), 507–530 (MREFISHMSISQNFVTFFCDDKFL), 531–552 (PKYVRRLSLHGDTVVNGDNFNG), 580–602 (LRVLDLEKCDDLNDDHLKEICNL), 603–624 (VLLKYLSLGGNISKLPKDIAKL), 625–647 (KDLEALDVRRSKVKIMPVEVFGL), 701–725 (MNKLRKLKIWCTSSAGSTDWTDLRE), 762–784 (PCYLSSLKLHGNFPQLPQFVTSL), 785–807 (RGLKELCLSSTKFTTGLLEALSN), 808–833 (LSYLQYLKLVADELEKFIIKVQGFPR), and 854–877 (LPFLVTLQLLCKDLHGLSDIKIEC).

It belongs to the disease resistance NB-LRR family. Expressed in leaves.

Probable disease resistance protein. Resistance proteins guard the plant against pathogens that contain an appropriate avirulence protein via an indirect interaction with this avirulence protein. That triggers a defense system including the hypersensitive response, which restricts the pathogen growth. At the opposite of cultivars Aichi asahi and Sasanishiki, the cultivars Nipponbare, Mokoto and Hitomebore don't recognize the effector avirulence protein AVR-Pia from M.oryzae. The chain is Disease resistance protein RGA4 from Oryza sativa subsp. japonica (Rice).